Consider the following 800-residue polypeptide: Mitochondrial intermediate peptidase (800 aa).

A mitochondrion-targeting transit peptide spans 1 to 23 (MAGHMLMPLRRRPWTCRACLQRL). A compositionally biased stretch (polar residues) spans 27 to 41 (RRSLETAASPSSQSD). The segment at 27–59 (RRSLETAASPSSQSDVYDYAPTNHSTQKKSNDE) is disordered. Histidine 563 is a binding site for Zn(2+). The active site involves glutamate 564. Zn(2+) is bound by residues histidine 567 and histidine 570.

Belongs to the peptidase M3 family. Zn(2+) serves as cofactor.

The protein localises to the mitochondrion matrix. It carries out the reaction Release of an N-terminal octapeptide as second stage of processing of some proteins imported into the mitochondrion.. Functionally, cleaves proteins, imported into the mitochondrion, to their mature size. While most mitochondrial precursor proteins are processed to the mature form in one step by mitochondrial processing peptidase (MPP), the sequential cleavage by MIP of an octapeptide after initial processing by MPP is a required step for a subgroup of nuclear-encoded precursor proteins destined for the matrix or the inner membrane. The polypeptide is Mitochondrial intermediate peptidase (oct1) (Aspergillus oryzae (strain ATCC 42149 / RIB 40) (Yellow koji mold)).